We begin with the raw amino-acid sequence, 367 residues long: Cyclin-D5-1 (367 aa).

The interval 307-333 (QPTSPASKSTTTTTGKRSSSSSCSEST) is disordered.

Belongs to the cyclin family. Cyclin D subfamily.

The sequence is that of Cyclin-D5-1 (CYCD5-1) from Oryza sativa subsp. japonica (Rice).